Reading from the N-terminus, the 1072-residue chain is Carbamoyl phosphate synthase large chain (1072 aa).

The carboxyphosphate synthetic domain stretch occupies residues 1–401 (MPKRLDINTI…SLLKAVRSLE (401 aa)). The ATP site is built by arginine 129, arginine 169, glycine 175, glycine 176, lysine 208, isoleucine 210, glutamate 215, glycine 241, valine 242, histidine 243, glutamine 284, and glutamate 298. Residues 133 to 327 (RTLMQDLNEP…IAKLAAKIAV (195 aa)) enclose the ATP-grasp 1 domain. Positions 284, 298, and 300 each coordinate Mg(2+). 3 residues coordinate Mn(2+): glutamine 284, glutamate 298, and asparagine 300. Residues 402-546 (LGIYHLELDH…YSTYADENES (145 aa)) are oligomerization domain. Positions 547 to 929 (IVTDRKSVVV…ALYKGLVASG (383 aa)) are carbamoyl phosphate synthetic domain. The region spanning 671–861 (EAALTKLGIP…MANVATKVIL (191 aa)) is the ATP-grasp 2 domain. ATP contacts are provided by arginine 707, arginine 746, glutamate 752, glycine 777, valine 778, histidine 779, serine 780, glutamine 820, and glutamate 832. Mg(2+) contacts are provided by glutamine 820, glutamate 832, and asparagine 834. Glutamine 820, glutamate 832, and asparagine 834 together coordinate Mn(2+). The 143-residue stretch at 930–1072 (INIPTHGSVI…QTKRHEVVHA (143 aa)) folds into the MGS-like domain. The segment at 930 to 1072 (INIPTHGSVI…QTKRHEVVHA (143 aa)) is allosteric domain.

Belongs to the CarB family. As to quaternary structure, composed of two chains; the small (or glutamine) chain promotes the hydrolysis of glutamine to ammonia, which is used by the large (or ammonia) chain to synthesize carbamoyl phosphate. Tetramer of heterodimers (alpha,beta)4. The cofactor is Mg(2+). It depends on Mn(2+) as a cofactor.

It carries out the reaction hydrogencarbonate + L-glutamine + 2 ATP + H2O = carbamoyl phosphate + L-glutamate + 2 ADP + phosphate + 2 H(+). The enzyme catalyses hydrogencarbonate + NH4(+) + 2 ATP = carbamoyl phosphate + 2 ADP + phosphate + 2 H(+). Its pathway is amino-acid biosynthesis; L-arginine biosynthesis; carbamoyl phosphate from bicarbonate: step 1/1. It functions in the pathway pyrimidine metabolism; UMP biosynthesis via de novo pathway; (S)-dihydroorotate from bicarbonate: step 1/3. In terms of biological role, large subunit of the glutamine-dependent carbamoyl phosphate synthetase (CPSase). CPSase catalyzes the formation of carbamoyl phosphate from the ammonia moiety of glutamine, carbonate, and phosphate donated by ATP, constituting the first step of 2 biosynthetic pathways, one leading to arginine and/or urea and the other to pyrimidine nucleotides. The large subunit (synthetase) binds the substrates ammonia (free or transferred from glutamine from the small subunit), hydrogencarbonate and ATP and carries out an ATP-coupled ligase reaction, activating hydrogencarbonate by forming carboxy phosphate which reacts with ammonia to form carbamoyl phosphate. The sequence is that of Carbamoyl phosphate synthase large chain from Bacillus cereus (strain ATCC 14579 / DSM 31 / CCUG 7414 / JCM 2152 / NBRC 15305 / NCIMB 9373 / NCTC 2599 / NRRL B-3711).